The following is a 436-amino-acid chain: NAD(P)-dependent benzaldehyde dehydrogenase (436 aa).

Residues G117–F119, K143–T147, R175–N178, G193–S194, E215–L216, C249, and E337–F339 contribute to the NADP(+) site. Residues E215 and C249 contribute to the active site.

It belongs to the aldehyde dehydrogenase family.

The enzyme catalyses benzaldehyde + NAD(+) + H2O = benzoate + NADH + 2 H(+). It catalyses the reaction benzaldehyde + NADP(+) + H2O = benzoate + NADPH + 2 H(+). Its pathway is aromatic compound metabolism; (R)-mandelate degradation; benzoate from (R)-mandelate: step 4/4. Functionally, NAD or NADP-dependent benzaldehyde dehydrogenase that catalyzes the conversion of benzaldehyde into benzoate in the (R)-mandelate degradation pathway. The sequence is that of NAD(P)-dependent benzaldehyde dehydrogenase (mdlD) from Pseudomonas putida (Arthrobacter siderocapsulatus).